Reading from the N-terminus, the 489-residue chain is MRVLHVCSELYPILKTGGLADVTAALPPALAGFGVDSRVLVPGFPAFINAIKDKQLLINIPSRFGAEEINIFLAKIPNTKIDIYVIDAPSLFARPGNPYADSSNQAYADNYLRFALLGWVAARISEGLDAKWKPEIVHSHDWHAGLVPAYIKASELASGKKAVKTVFTVHNLAYQGLFPMSVFTELDLPGIFLSMNGLEFYGQVSFMKAGLYFADKITTVSPTYAKEIQIYEQGCGLEGLLADRHNDLYGVLNGVDPQIWNPKKDSLIATNYSSTTVATGKAKCKLALQQMMGLAEKEDALLFGIVTRLTEQKGLNLLIEAIGEITSRGGQIVLLGSGDKALEEVFLAAAKKYSKSIAVQIGYDEEQAHRIIAGSDVIMVPSRFEPCGLTQLYGLTYGTLPLVHKVGGLADTIIDSSLENLADGTATGFVFDEFSVESLTLAIRRAFALYNRKTDWKKVRKTAMQQQVTWDSSAEKIYQIYKNLVIENN.

ADP-alpha-D-glucose is bound at residue Lys15.

This sequence belongs to the glycosyltransferase 1 family. Bacterial/plant glycogen synthase subfamily.

The catalysed reaction is [(1-&gt;4)-alpha-D-glucosyl](n) + ADP-alpha-D-glucose = [(1-&gt;4)-alpha-D-glucosyl](n+1) + ADP + H(+). Its pathway is glycan biosynthesis; glycogen biosynthesis. Its function is as follows. Synthesizes alpha-1,4-glucan chains using ADP-glucose. In Francisella tularensis subsp. holarctica (strain FTNF002-00 / FTA), this protein is Glycogen synthase.